The chain runs to 407 residues: UDP-N-acetyl-D-mannosamine dehydrogenase (407 aa).

Belongs to the UDP-glucose/GDP-mannose dehydrogenase family.

It catalyses the reaction UDP-N-acetyl-alpha-D-mannosamine + 2 NAD(+) + H2O = UDP-N-acetyl-alpha-D-mannosaminouronate + 2 NADH + 3 H(+). Its pathway is capsule biogenesis; capsule polysaccharide biosynthesis. Its function is as follows. Dehydrogenase involved in the biosynthesis of capsular polysaccharides. Catalyzes the NAD(+)-dependent oxidation of UDP-N-acetyl-D-mannosamine (UDP-ManNAc) to UDP-N-acetyl-D-mannosaminuronic acid (UDP-ManNAcA). This chain is UDP-N-acetyl-D-mannosamine dehydrogenase, found in Campylobacter jejuni.